A 353-amino-acid chain; its full sequence is Holliday junction branch migration complex subunit RuvB (353 aa).

Positions 4–190 are large ATPase domain (RuvB-L); that stretch reads HYIRFKIMTN…FGIPMRLNFY (187 aa). ATP-binding positions include Ile29, Arg30, Gly71, Lys74, Thr75, Thr76, 137–139, Arg180, Tyr190, and Arg227; that span reads EDF. Thr75 contributes to the Mg(2+) binding site. The tract at residues 191–261 is small ATPAse domain (RuvB-S); the sequence is NTEELKKVLN…ISDFGLNRLE (71 aa). The segment at 264–353 is head domain (RuvB-H); that stretch reads RIGLDSNDYR…HQFNIFNEHE (90 aa). 3 residues coordinate DNA: Arg300, Arg319, and Arg324.

The protein belongs to the RuvB family. In terms of assembly, homohexamer. Forms an RuvA(8)-RuvB(12)-Holliday junction (HJ) complex. HJ DNA is sandwiched between 2 RuvA tetramers; dsDNA enters through RuvA and exits via RuvB. An RuvB hexamer assembles on each DNA strand where it exits the tetramer. Each RuvB hexamer is contacted by two RuvA subunits (via domain III) on 2 adjacent RuvB subunits; this complex drives branch migration. In the full resolvosome a probable DNA-RuvA(4)-RuvB(12)-RuvC(2) complex forms which resolves the HJ.

It is found in the cytoplasm. It carries out the reaction ATP + H2O = ADP + phosphate + H(+). In terms of biological role, the RuvA-RuvB-RuvC complex processes Holliday junction (HJ) DNA during genetic recombination and DNA repair, while the RuvA-RuvB complex plays an important role in the rescue of blocked DNA replication forks via replication fork reversal (RFR). RuvA specifically binds to HJ cruciform DNA, conferring on it an open structure. The RuvB hexamer acts as an ATP-dependent pump, pulling dsDNA into and through the RuvAB complex. RuvB forms 2 homohexamers on either side of HJ DNA bound by 1 or 2 RuvA tetramers; 4 subunits per hexamer contact DNA at a time. Coordinated motions by a converter formed by DNA-disengaged RuvB subunits stimulates ATP hydrolysis and nucleotide exchange. Immobilization of the converter enables RuvB to convert the ATP-contained energy into a lever motion, pulling 2 nucleotides of DNA out of the RuvA tetramer per ATP hydrolyzed, thus driving DNA branch migration. The RuvB motors rotate together with the DNA substrate, which together with the progressing nucleotide cycle form the mechanistic basis for DNA recombination by continuous HJ branch migration. Branch migration allows RuvC to scan DNA until it finds its consensus sequence, where it cleaves and resolves cruciform DNA. The protein is Holliday junction branch migration complex subunit RuvB of Rickettsia massiliae (strain Mtu5).